The following is a 386-amino-acid chain: Galactokinase (386 aa).

35 to 38 lines the substrate pocket; the sequence is EHTD. ATP is bound at residue 125–131; it reads GAGLSSS. Residues Ser-131 and Glu-163 each contribute to the Mg(2+) site. Asp-175 (proton acceptor) is an active-site residue. Tyr-224 contributes to the substrate binding site.

This sequence belongs to the GHMP kinase family. GalK subfamily.

It localises to the cytoplasm. It carries out the reaction alpha-D-galactose + ATP = alpha-D-galactose 1-phosphate + ADP + H(+). It functions in the pathway carbohydrate metabolism; galactose metabolism. Its function is as follows. Catalyzes the transfer of the gamma-phosphate of ATP to D-galactose to form alpha-D-galactose-1-phosphate (Gal-1-P). This chain is Galactokinase, found in Vibrio cholerae serotype O1 (strain ATCC 39315 / El Tor Inaba N16961).